The following is a 419-amino-acid chain: Phospho-N-acetylmuramoyl-pentapeptide-transferase (419 aa).

10 consecutive transmembrane segments (helical) span residues 22-42 (YVSFRSAVAIVLALLLATVIG), 72-92 (TPTMGGLIIIISILIPTLLLA), 99-119 (ILLMIVTTVLLGSLGFLDDYI), 135-155 (IIGQVGLGFIIGIVLYMNPAV), 208-228 (VLFGWILFVCVAVVVVTFISN), 238-258 (GLATGSSAIIGVVLAIFAYVS), 278-298 (LTIFAFAFVGATIGFLWYNAY), 303-323 (FMGDTGSLTLGGIIAVFALII), 328-348 (LLPILCFVFIIEGLSVMIQVF), and 396-416 (KITVRFWLVGIIMAAITIATL).

Belongs to the glycosyltransferase 4 family. MraY subfamily. It depends on Mg(2+) as a cofactor.

The protein resides in the cell inner membrane. The catalysed reaction is UDP-N-acetyl-alpha-D-muramoyl-L-alanyl-gamma-D-glutamyl-meso-2,6-diaminopimeloyl-D-alanyl-D-alanine + di-trans,octa-cis-undecaprenyl phosphate = di-trans,octa-cis-undecaprenyl diphospho-N-acetyl-alpha-D-muramoyl-L-alanyl-D-glutamyl-meso-2,6-diaminopimeloyl-D-alanyl-D-alanine + UMP. It participates in cell wall biogenesis; peptidoglycan biosynthesis. Catalyzes the initial step of the lipid cycle reactions in the biosynthesis of the cell wall peptidoglycan: transfers peptidoglycan precursor phospho-MurNAc-pentapeptide from UDP-MurNAc-pentapeptide onto the lipid carrier undecaprenyl phosphate, yielding undecaprenyl-pyrophosphoryl-MurNAc-pentapeptide, known as lipid I. This Porphyromonas gingivalis (strain ATCC BAA-308 / W83) protein is Phospho-N-acetylmuramoyl-pentapeptide-transferase.